The following is a 189-amino-acid chain: Transcription factor FapR (189 aa).

It belongs to the FapR family.

Transcriptional factor involved in regulation of membrane lipid biosynthesis by repressing genes involved in fatty acid and phospholipid metabolism. The polypeptide is Transcription factor FapR (Exiguobacterium sibiricum (strain DSM 17290 / CCUG 55495 / CIP 109462 / JCM 13490 / 255-15)).